The primary structure comprises 863 residues: Potassium/sodium hyperpolarization-activated cyclic nucleotide-gated channel 2 (863 aa).

The segment covering 1–10 (MDARGGGGRP) has biased composition (gly residues). Residues 1–131 (MDARGGGGRP…AGPAGEPRGS (131 aa)) form a disordered region. The Cytoplasmic segment spans residues 1–188 (MDARGGGGRP…PYSDFRFYWD (188 aa)). A compositionally biased stretch (pro residues) spans 17–47 (TPAPGPPPPPPPPAPPQPQPPPAPPPNPTTP). The span at 106-128 (GAASGPSAAEEAGSEEAGPAGEP) shows a compositional bias: low complexity. 2 positions are modified to phosphoserine: Ser119 and Ser134. Positions 131 to 182 (SQASFLQRQFGALLQPGVNKFSLRMFGSQKAVEREQERVKSAGAWIIHPYSD) are involved in subunit assembly. A helical transmembrane segment spans residues 189 to 209 (FTMLLFMVGNLIIIPVGITFF). Residues 210–213 (KDET) are Extracellular-facing. Residues 214–234 (TAPWIVFNVVSDTFFLMDLVL) form a helical membrane-spanning segment. Over 235–261 (NFRTGIVIEDNTEIILDPEKIKKKYLR) the chain is Cytoplasmic. A helical transmembrane segment spans residues 262–282 (TWFVVDFVSSIPVDYIFLIVE). Topologically, residues 283 to 290 (KGIDSEVY) are extracellular. The chain crosses the membrane as a helical; Voltage-sensor span at residues 291–311 (KTARALRIVRFTKILSLLRLL). The Cytoplasmic segment spans residues 312 to 342 (RLSRLIRYIHQWEEIFHMTYDLASAVMRICN). A helical membrane pass occupies residues 343–363 (LISMMLLLCHWDGCLQFLVPM). Residues 364–386 (LQDFPSDCWVSINNMVNHSWSEL) lie on the Extracellular side of the membrane. A glycan (N-linked (GlcNAc...) asparagine) is linked at Asn380. Residues 387–408 (YSFALFKAMSHMLCIGYGRQAP) constitute an intramembrane region (pore-forming). Over 409–413 (ESMTD) the chain is Extracellular. Residues 414–434 (IWLTMLSMIVGATCYAMFIGH) traverse the membrane as a helical segment. At 435 to 863 (ATALIQSLDS…SARSRLSSNL (429 aa)) the chain is on the cytoplasmic side. 3',5'-cyclic AMP-binding residues include Gly581, Glu582, Cys584, Arg591, Thr592, and Arg632. Ser641 is modified (phosphoserine; by PKG/PRKG2). Ser726 is subject to Phosphoserine. Arg728 is subject to Omega-N-methylarginine. Positions 730–863 (VRRAPPGPLP…SARSRLSSNL (134 aa)) are disordered. The segment covering 734-755 (PPGPLPPAASPGPPAASPPAAP) has biased composition (pro residues). Phosphoserine is present on residues Ser743, Ser750, and Ser757. 3 stretches are compositionally biased toward low complexity: residues 756 to 765 (SSPRAPRTSP), 778 to 800 (PALP…PSLP), and 808 to 834 (PAAS…AAPS). Phosphoserine is present on residues Ser840, Ser842, and Ser847.

This sequence belongs to the potassium channel HCN family. Homotetramer. The channel is composed of a homo- or heterotetrameric complex of pore-forming subunits. Heterotetramer with HCN1. Forms an obligate 4:4 complex with accessory subunit PEX5L; regulates HCN2 cell-surface expression and cyclic nucleotide dependence. Interacts with KCNE2. Post-translationally, S-palmitoylated. N-glycosylated; required for cell surface trafficking of HCN2. In terms of processing, phosphorylation at Ser-641 by PRKG2 shifts the voltage-dependence to more negative voltages, hence counteracting the stimulatory effect of cGMP on gating. As to expression, highly expressed in brain. Detected at low levels in heart, in ventricle, atrium and in sinoatrial node (SAN).

The protein resides in the cell membrane. It carries out the reaction Na(+)(in) = Na(+)(out). The enzyme catalyses K(+)(in) = K(+)(out). The catalysed reaction is NH4(+)(in) = NH4(+)(out). Activated by cAMP, and at 10-100 times higher concentrations, also by cGMP. cAMP binding causes a conformation change that leads to the assembly of an active tetramer and channel opening. In the absence of cAMP, the C-terminal region is thought to exert a tonic inhibition on the pore when HCN2 is in a non-tetrameric form. Channel activity is modulated by intracellular chloride ions and pH; acidic pH shifts the activation to more negative voltages. Phosphatidylinositol-4,5- bisphosphate (PIP(2)) acts as a ligand that allosterically opens HCN2 by shifting voltage-dependent channel activation toward depolarized potentials. Inhibited by extracellular cesium ions. Its function is as follows. Hyperpolarization-activated ion channel exhibiting weak selectivity for potassium over sodium ions. Contributes to the native pacemaker currents in heart (If) and in neurons (Ih). Can also transport ammonium in the distal nephron. Involved in the initiation of neuropathic pain in sensory neurons. The chain is Potassium/sodium hyperpolarization-activated cyclic nucleotide-gated channel 2 from Mus musculus (Mouse).